We begin with the raw amino-acid sequence, 178 residues long: ATP synthase subunit b, chloroplastic (178 aa).

A helical membrane pass occupies residues 34–50; sequence LAILTGGIFYLGSNALS.

This sequence belongs to the ATPase B chain family. F-type ATPases have 2 components, F(1) - the catalytic core - and F(0) - the membrane proton channel. F(1) has five subunits: alpha(3), beta(3), gamma(1), delta(1), epsilon(1). F(0) has four main subunits: a(1), b(1), b'(1) and c(10-14). The alpha and beta chains form an alternating ring which encloses part of the gamma chain. F(1) is attached to F(0) by a central stalk formed by the gamma and epsilon chains, while a peripheral stalk is formed by the delta, b and b' chains.

The protein localises to the plastid. It is found in the chloroplast thylakoid membrane. F(1)F(0) ATP synthase produces ATP from ADP in the presence of a proton or sodium gradient. F-type ATPases consist of two structural domains, F(1) containing the extramembraneous catalytic core and F(0) containing the membrane proton channel, linked together by a central stalk and a peripheral stalk. During catalysis, ATP synthesis in the catalytic domain of F(1) is coupled via a rotary mechanism of the central stalk subunits to proton translocation. Its function is as follows. Component of the F(0) channel, it forms part of the peripheral stalk, linking F(1) to F(0). This chain is ATP synthase subunit b, chloroplastic, found in Ochrosphaera neapolitana.